The primary structure comprises 1012 residues: DNA polymerase catalytic subunit (1012 aa).

The tract at residues 1-31 is disordered; the sequence is MDFFNPFIDPTRGGPRNTVRQPTPSQSPTVP. Positions 21–31 are enriched in low complexity; sequence QPTPSQSPTVP.

Belongs to the DNA polymerase type-B family. As to quaternary structure, forms a complex with the ssDNA-binding protein, the DNA polymerase processivity factor, and the alkaline exonuclease. Interacts with the putative helicase-primase complex subunit; this interaction may coordinate leading and lagging strand DNA synthesis at the replication fork.

The protein localises to the host nucleus. The enzyme catalyses DNA(n) + a 2'-deoxyribonucleoside 5'-triphosphate = DNA(n+1) + diphosphate. It carries out the reaction Endonucleolytic cleavage to 5'-phosphomonoester.. Functionally, replicates viral genomic DNA. The replication complex is composed of six viral proteins: the DNA polymerase, processivity factor, primase, primase-associated factor, helicase, and ssDNA-binding protein. Additionally, the polymerase contains an intrinsic ribonuclease H (RNase H) activity that specifically degrades RNA/DNA heteroduplexes or duplex DNA substrates in the 5' to 3' direction. Therefore, it can catalyze the excision of the RNA primers that initiate the synthesis of Okazaki fragments at a replication fork during viral DNA replication. This is DNA polymerase catalytic subunit (ORF9) from Human herpesvirus 8 type P (isolate GK18) (HHV-8).